The primary structure comprises 214 residues: Cytochrome c biogenesis ATP-binding export protein CcmA (214 aa).

The ABC transporter domain occupies 12–214; sequence LAARALAFSR…TRMLTLEAAA (203 aa). Position 44 to 51 (44 to 51) interacts with ATP; it reads GDNGAGKT.

This sequence belongs to the ABC transporter superfamily. CcmA exporter (TC 3.A.1.107) family. As to quaternary structure, the complex is composed of two ATP-binding proteins (CcmA) and two transmembrane proteins (CcmB).

Its subcellular location is the cell inner membrane. The catalysed reaction is heme b(in) + ATP + H2O = heme b(out) + ADP + phosphate + H(+). Part of the ABC transporter complex CcmAB involved in the biogenesis of c-type cytochromes; once thought to export heme, this seems not to be the case, but its exact role is uncertain. Responsible for energy coupling to the transport system. This Xanthomonas campestris pv. campestris (strain 8004) protein is Cytochrome c biogenesis ATP-binding export protein CcmA.